Consider the following 246-residue polypeptide: Exosome complex component SKI6 (246 aa).

This sequence belongs to the RNase PH family. In terms of assembly, component of the RNA exosome complex. Specifically part of the catalytically inactive RNA exosome core complex (Exo-9) which may associate with the catalytic subunits RRP6 and DIS3 in cytoplasmic- and nuclear-specific RNA exosome complex forms. Exo-9 is formed by a hexameric base ring of RNase PH domain-containing subunits and a cap ring consisting of CSL4, RRP4 and RRP40.

The protein resides in the cytoplasm. It localises to the nucleus. Its subcellular location is the nucleolus. Non-catalytic component of the RNA exosome complex which has 3'-&gt;5' exoribonuclease activity and participates in a multitude of cellular RNA processing and degradation events. In the nucleus, the RNA exosome complex is involved in proper maturation of stable RNA species such as rRNA, snRNA and snoRNA, in the elimination of RNA processing by-products and non-coding 'pervasive' transcripts, such as antisense RNA species and cryptic unstable transcripts (CUTs), and of mRNAs with processing defects, thereby limiting or excluding their export to the cytoplasm. In the cytoplasm, the RNA exosome complex is involved in general mRNA turnover and in RNA surveillance pathways, preventing translation of aberrant mRNAs. The catalytic inactive RNA exosome core complex of 9 subunits (Exo-9) is proposed to play a pivotal role in the binding and presentation of RNA for ribonucleolysis, and to serve as a scaffold for the association with catalytic subunits and accessory proteins or complexes. SKI6 is part of the hexameric ring of RNase PH domain-containing subunits proposed to form a central channel which threads RNA substrates for degradation. The protein is Exosome complex component SKI6 (SKI6) of Saccharomyces cerevisiae (strain ATCC 204508 / S288c) (Baker's yeast).